The primary structure comprises 122 residues: Large ribosomal subunit protein uL14 (122 aa).

The protein belongs to the universal ribosomal protein uL14 family. As to quaternary structure, part of the 50S ribosomal subunit. Forms a cluster with proteins L3 and L19. In the 70S ribosome, L14 and L19 interact and together make contacts with the 16S rRNA in bridges B5 and B8.

Binds to 23S rRNA. Forms part of two intersubunit bridges in the 70S ribosome. The sequence is that of Large ribosomal subunit protein uL14 from Dehalococcoides mccartyi (strain ATCC BAA-2100 / JCM 16839 / KCTC 5957 / BAV1).